Consider the following 319-residue polypeptide: Ankyrin repeat domain-containing protein 1 (319 aa).

Positions 61–89 (KTEKQREAELKKKKLEQRSKLENLEDLEI) form a coiled coil. 5 ANK repeats span residues 152-181 (YKRT…QIEF), 185-214 (LEST…KISA), 218-247 (LLST…DLNA), 251-280 (EGDT…DLNV), and 284-315 (AGKT…KASR).

Interacts with TTN/titin and YBX1.

The protein resides in the nucleus. Its function is as follows. May play an important role in endothelial cell activation. May act as a nuclear transcription factor that negatively regulates the expression of cardiac genes. This Bos taurus (Bovine) protein is Ankyrin repeat domain-containing protein 1 (ANKRD1).